Reading from the N-terminus, the 241-residue chain is Ribose-5-phosphate isomerase A (241 aa).

Substrate-binding positions include 28–31, 83–86, and 96–99; these read TGST, DGAD, and KGGG. E105 (proton acceptor) is an active-site residue. K123 is a binding site for substrate.

This sequence belongs to the ribose 5-phosphate isomerase family. Homodimer.

It catalyses the reaction aldehydo-D-ribose 5-phosphate = D-ribulose 5-phosphate. It participates in carbohydrate degradation; pentose phosphate pathway; D-ribose 5-phosphate from D-ribulose 5-phosphate (non-oxidative stage): step 1/1. Its function is as follows. Catalyzes the reversible conversion of ribose-5-phosphate to ribulose 5-phosphate. The sequence is that of Ribose-5-phosphate isomerase A from Bradyrhizobium diazoefficiens (strain JCM 10833 / BCRC 13528 / IAM 13628 / NBRC 14792 / USDA 110).